Consider the following 209-residue polypeptide: Transcriptional activator FHA1 (209 aa).

An FHA domain is found at 30–87 (IILGRNSKKSTVDVDLSSLGGGMNISRHHARIFYDFQRRRFNLEVLGKNGCFVEGVLH). Acidic residues predominate over residues 157 to 171 (YDEEEYDDDDDDDDG). The interval 157–209 (YDEEEYDDDDDDDDGTGGKKMRRCDGAEGGGGYGGYGSCGSSGKASISGQLGQ) is disordered. Residues 183 to 196 (AEGGGGYGGYGSCG) show a composition bias toward gly residues. Residues 200 to 209 (KASISGQLGQ) are compositionally biased toward polar residues.

In terms of tissue distribution, expressed in roots, stems, leaves, young flower buds and open flowers.

The protein resides in the nucleus. Transcription regulator that may be involved in the control of the pre-rRNA processing machinery. Can rescue the phenotypes of slow growth and defective rRNA processing in the yeast fhl1 null mutant. Shows transactivation activity in yeast. The chain is Transcriptional activator FHA1 from Nicotiana tabacum (Common tobacco).